The primary structure comprises 298 residues: Probable oxidoreductase (298 aa).

9 to 33 (VVTGGASGLGAETVRALAAAGAEVT) serves as a coordination point for NAD(+). Position 139 (serine 139) interacts with substrate. The active-site Proton acceptor is tyrosine 165.

It belongs to the short-chain dehydrogenases/reductases (SDR) family.

The protein is Probable oxidoreductase of Streptomyces antibioticus.